The primary structure comprises 231 residues: Small ribosomal subunit protein uS3 (231 aa).

The KH type-2 domain occupies 18–97 (VDEYLAKQFY…NPELNARVMA (80 aa)).

The protein belongs to the universal ribosomal protein uS3 family. In terms of assembly, part of the 30S ribosomal subunit.

In terms of biological role, binds the lower part of the 30S subunit head. This is Small ribosomal subunit protein uS3 from Sulfolobus acidocaldarius (strain ATCC 33909 / DSM 639 / JCM 8929 / NBRC 15157 / NCIMB 11770).